Reading from the N-terminus, the 132-residue chain is Fluoride-specific ion channel FluC (132 aa).

The next 4 helical transmembrane spans lie at 6 to 26, 41 to 61, 73 to 93, and 104 to 124; these read VLQLIAVGFGGALGAMARFIV, GTLVVNSLGSFAIGLIMILMI, FLIVGFLGAFTTFSTFSFETY, and AMLNIGVSVLTGLFAVWLGIW. Positions 80 and 83 each coordinate Na(+).

It belongs to the fluoride channel Fluc/FEX (TC 1.A.43) family.

Its subcellular location is the cell inner membrane. The catalysed reaction is fluoride(in) = fluoride(out). Na(+) is not transported, but it plays an essential structural role and its presence is essential for fluoride channel function. Functionally, fluoride-specific ion channel. Important for reducing fluoride concentration in the cell, thus reducing its toxicity. In Hydrogenovibrio crunogenus (strain DSM 25203 / XCL-2) (Thiomicrospira crunogena), this protein is Fluoride-specific ion channel FluC.